Reading from the N-terminus, the 242-residue chain is UPF0246 protein SSA_1395 (242 aa).

It belongs to the UPF0246 family.

The chain is UPF0246 protein SSA_1395 from Streptococcus sanguinis (strain SK36).